Here is a 377-residue protein sequence, read N- to C-terminus: MRVFVSSRRVKRWQFFHLFAICFILSFMVFWGPINNYIMSHMKSYSYRYLINSYDFVNDSLSLKHSSVQPHHPYLINHREKCQAQDVLLLLFIKTAPENYERRSAIRKTWGNENYVQSQLNANIKILFALGTPHPLKGKELQKRLIWEDQVYHDIIQQDFTDSFHNLTFKFLLQFGWANTFCPHARFLMTADDDIFIHMPNLIEYLQGLEQVGVRDFWIGHVHRGGPPVRDKSSKYYVPYEMYKWPAYPDYTAGAAYVVSNDVAAKIYEASQTLNSSMYIDDVFMGLCANKVGVVPQDHVFFSGEGKIPYHPCIYEKMITSHGHSQDLQDLWVEATDPKVKDISKGFFGQIYCRLIKIVLLCRLTYRNSYPCRAAFA.

Topologically, residues 1–14 (MRVFVSSRRVKRWQ) are cytoplasmic. A helical; Signal-anchor for type II membrane protein membrane pass occupies residues 15–35 (FFHLFAICFILSFMVFWGPIN). The Lumenal segment spans residues 36-377 (NYIMSHMKSY…NSYPCRAAFA (342 aa)). A glycan (N-linked (GlcNAc...) asparagine) is linked at N58.

It belongs to the glycosyltransferase 31 family.

Its subcellular location is the golgi apparatus membrane. The catalysed reaction is a beta-D-Gal-(1-&gt;4)-beta-D-Glc-(1&lt;-&gt;1)-Cer(d18:1(4E)) + UDP-N-acetyl-alpha-D-glucosamine = a beta-D-GlcNAc-(1-&gt;3)-beta-D-Gal-(1-&gt;4)-beta-D-Glc-(1&lt;-&gt;1)-Cer(d18:1(4E)) + UDP + H(+). It carries out the reaction a neolactoside nLc4Cer(d18:1(4E)) + UDP-N-acetyl-alpha-D-glucosamine = a neolactoside IV(3)-beta-GlcNAc-nLc4Cer(d18:1(4E)) + UDP + H(+). The protein operates within protein modification; protein glycosylation. Functionally, beta-1,3-N-acetylglucosaminyltransferase that plays a key role in the synthesis of lacto- or neolacto-series carbohydrate chains on glycolipids, notably by participating in biosynthesis of HNK-1 and Lewis X carbohydrate structures. Has strong activity toward lactosylceramide (LacCer) and neolactotetraosylceramide (nLc(4)Cer; paragloboside), resulting in the synthesis of Lc(3)Cer and neolactopentaosylceramide (nLc(5)Cer), respectively. Probably plays a central role in regulating neolacto-series glycolipid synthesis during embryonic development. This Rattus norvegicus (Rat) protein is Lactosylceramide 1,3-N-acetyl-beta-D-glucosaminyltransferase.